The chain runs to 197 residues: A-kinase anchor protein 14 (197 aa).

Composition is skewed to polar residues over residues 1-11 (MSETQNSTSQK) and 19-29 (AASQTMPNTQD). The segment at 1 to 29 (MSETQNSTSQKAMDEDNKAASQTMPNTQD) is disordered. The interval 35–52 (ELTQVALALVEDVINYAV) is RII-binding.

In terms of assembly, binds to type II regulatory subunits (RII). Present in cilia (at protein level). Expressed in tissues containing axoneme-based organelles (cilia and/or flagella): trachea and testis. Highly expressed in airway cilia.

It is found in the cytoplasm. In terms of biological role, binds to type II regulatory subunits of protein kinase A and anchors/targets them. The chain is A-kinase anchor protein 14 (AKAP14) from Homo sapiens (Human).